A 444-amino-acid polypeptide reads, in one-letter code: Phosphoglucosamine mutase (444 aa).

Catalysis depends on serine 102, which acts as the Phosphoserine intermediate. Mg(2+) contacts are provided by serine 102, aspartate 241, aspartate 243, and aspartate 245. Serine 102 carries the phosphoserine modification.

The protein belongs to the phosphohexose mutase family. Requires Mg(2+) as cofactor. In terms of processing, activated by phosphorylation.

It carries out the reaction alpha-D-glucosamine 1-phosphate = D-glucosamine 6-phosphate. In terms of biological role, catalyzes the conversion of glucosamine-6-phosphate to glucosamine-1-phosphate. The polypeptide is Phosphoglucosamine mutase (Glaesserella parasuis serovar 5 (strain SH0165) (Haemophilus parasuis)).